The sequence spans 3268 residues: E3 ubiquitin-protein ligase TOM1 (3268 aa).

Serine 1890 bears the Phosphoserine mark. Disordered regions lie at residues 1941–2023 and 2038–2083; these read VFSD…EDDA and GYDV…MGDS. Residues 1942-1955 show a composition bias toward acidic residues; sequence FSDEDDDMGEEDAD. The segment covering 1967–1976 has biased composition (polar residues); it reads SSEMQSSTAD. 3 stretches are compositionally biased toward acidic residues: residues 1978–1988, 2042–2053, and 2063–2074; these read TDVDYEVDDAD, DLSDYDVDESDW, and SDEDSESSEDEP. Threonine 2096 carries the post-translational modification Phosphothreonine. Phosphoserine is present on residues serine 2119, serine 2376, serine 2406, and serine 2418. Residues 2416 to 2426 show a composition bias toward acidic residues; the sequence is DVSNNDEEVEN. Residues 2416–2443 form a disordered region; it reads DVSNNDEEVENGLDHGNSNDRNNADPEK. The region spanning 2932-3268 is the HECT domain; it reads TNDEIKNSKL…NEGHEGFGLA (337 aa). Catalysis depends on cysteine 3235, which acts as the Glycyl thioester intermediate.

Belongs to the UPL family. TOM1/PTR1 subfamily. As to quaternary structure, interacts with the ADA3/NGG1 subunit of the SAGA complex. Interacts with KRR1.

The protein localises to the nucleus. It is found in the nucleolus. The catalysed reaction is S-ubiquitinyl-[E2 ubiquitin-conjugating enzyme]-L-cysteine + [acceptor protein]-L-lysine = [E2 ubiquitin-conjugating enzyme]-L-cysteine + N(6)-ubiquitinyl-[acceptor protein]-L-lysine.. It participates in protein modification; protein ubiquitination. Probable ubiquitin ligase protein involved in many cellular processes, such as transcription regulation, maintenance of nuclear structure, cell cycle, mRNA export and rRNA maturation. E3 ubiquitin ligase proteins mediate ubiquitination and subsequent proteasomal degradation of target proteins. Involved in transcription regulation by interacting, and probably mediating, ubiquitination of some subunit of the SAGA complex. Required for SPT7 ubiquitination. Participates in mRNA export from the nucleus by regulating the transport of hnRNP proteins. Required for the shuttling of hnRNP protein NAB2, probably by mediating ubiquitination of a protein associated with NAB2. Also required for full induction of the general stress and heat-shock responses. Involved in 18S rRNA maturation by affecting several early steps in the rRNA processing pathway. This chain is E3 ubiquitin-protein ligase TOM1 (TOM1), found in Saccharomyces cerevisiae (strain ATCC 204508 / S288c) (Baker's yeast).